The sequence spans 206 residues: MSGTTETQLRDLLSSMHLRHRFLGVFDKSFPGFLDPHVPASAIVNTGSRASGGMHWIGFAFDPAAGRCYMFDPFGWSDQKLWELYRVKYNAFMRRTGLRQPDRCFTLVRSTEAVQCPCSAACGLFSALFIVSFDRYRSKPMDGNPVIDTVVGVKHENMNSPPYRDILHRNQERTYYWWTKNSAYFRAHQEELRRETALNALPENHV.

Catalysis depends on residues His-55, Asp-72, and Cys-122.

The protein belongs to the peptidase C5 family. As to quaternary structure, interacts with protease cofactor pVI-C; this interaction is necessary for protease activation.

Its subcellular location is the virion. It localises to the host nucleus. The enzyme catalyses Cleaves proteins of the adenovirus and its host cell at two consensus sites: -Yaa-Xaa-Gly-Gly-|-Xaa- and -Yaa-Xaa-Gly-Xaa-|-Gly- (in which Yaa is Met, Ile or Leu, and Xaa is any amino acid).. With respect to regulation, requires DNA and protease cofactor for maximal activation. Inside nascent virions, becomes partially activated by binding to the viral DNA, allowing it to cleave the cofactor that binds to the protease and fully activates it. Actin, like the viral protease cofactor, seems to act as a cofactor in the cleavage of cytokeratin 18 and of actin itself. Functionally, cleaves viral precursor proteins (pTP, pIIIa, pVI, pVII, pVIII, and pX) inside newly assembled particles giving rise to mature virions. Protease complexed to its cofactor slides along the viral DNA to specifically locate and cleave the viral precursors. Mature virions have a weakened organization compared to the unmature virions, thereby facilitating subsequent uncoating. Without maturation, the particle lacks infectivity and is unable to uncoat. Late in adenovirus infection, in the cytoplasm, may participate in the cytoskeleton destruction. Cleaves host cell cytoskeletal keratins K7 and K18. This Fowl adenovirus A serotype 1 (strain CELO / Phelps) (FAdV-1) protein is Protease.